The chain runs to 64 residues: Probable cytochrome c oxidase subunit 5C-1 (64 aa).

A helical transmembrane segment spans residues Ser-15–Trp-34.

The protein belongs to the cytochrome c oxidase subunit 5C family.

The protein localises to the mitochondrion inner membrane. Functionally, this protein is one of the nuclear-coded polypeptide chains of cytochrome c oxidase, the terminal oxidase in mitochondrial electron transport. The polypeptide is Probable cytochrome c oxidase subunit 5C-1 (Arabidopsis thaliana (Mouse-ear cress)).